The following is a 1134-amino-acid chain: MKPKHYPDTISSPDFSSLEKEIIKFWQENKIFEQSVEKRSKDNCFVFYDGPPFANGLPHYGHLLTGFIKDAFARYQTMLQKKVERRFGWDCHGLPAEMGAEKELGISGRTEIEKFGIEKFNNYCRTSVMKFSSEWEKYVNRQARWVDFHNDYKTMDRSFMESVIWAFKQLYDKGLVYESVRVVPYSWACETPLSNFETRLDTAYRKKTSKAVTVAFELLENPQQFKQKCKLLAWTTTPWTLPSNLALAIGKDIEYCAVSVHSSVSFQHVTLESREKETWIPLSRTGMTEEGTETVTEDNEVSLVNNEIYIFAEDYLEKFIGHCEQNNIPYENCNTKLKADDLAGLSYKPLFNYFKGTKNAFRVFIADYVTGEDGTGVVHTAPGFGEEDFYLCQSHDIPAICPIDNSGRFTAEVSDLTGIHVFDTNDAIIKKLKEQGNWFKTEQYIHNYPHCWRTDTPLIYRAMPSWYVAVTKFKERMIELNKRVNWIPTHIRDGQFGKWLERAHDWSISRNRFWGTPIPIWKSDNARYPRVDVYGSIAELERDFNVKVNDLHRPFIDSLTRPNPDDPTGKSIMRRVPDVFDCWFESGSVPFAQVHYPFENKEWFESNFPADFITEYIAQTRGWFYTLFVLSTALFDSEPFKNCICHGVVLDVKGQKLSKRLNNYADPMEVFDKYGSDALRFLMLSGSIVCGGNLFLNKEGSSIRDVLKNVMKPIWNSYHFFTMYANADGIKAEVCKDYKSTIDSYMIFKCFEAVESIQASMSNYNSQEACKILIDFFEVLNNWYIRRSRERFWKSNLDQDKTDAYNVLYTVFYYILRAAVPLLPLITETIWQGLKYKEISVHLADFPQLERYDSELIAKMDLVREICNSALSIRNTFNIRVRQPLGSMTVYHQSSCSFLESKPLSVVIPKFSPVIPMRDTGTQKEKKWSNAEMKTSMNEYQEMIKDEVNVKELKLVNSLEGIASLELKLNFPMLGKRIPDKVKKLVQYVKEGKWKQVDNEQVFLGNESESYIIEKDEYELLLKTNSEYSSVFGDNKGIVILNTALDDALVLEGLARDVVRLIQEARKQADFHISDRIRVIIKTEDEKIKRAINTWGEYIREQTLSLSLEINIEIGDNFYSKEYQDLIVGIELNC.

A 'HIGH' region motif is present at residues 52–62 (PFANGLPHYGH). Positions 656 to 660 (KLSKR) match the 'KMSKS' region motif. Position 659 (Lys-659) interacts with ATP.

It belongs to the class-I aminoacyl-tRNA synthetase family. IleS type 2 subfamily. In terms of assembly, monomer. The cofactor is Zn(2+).

It localises to the cytoplasm. It catalyses the reaction tRNA(Ile) + L-isoleucine + ATP = L-isoleucyl-tRNA(Ile) + AMP + diphosphate. Catalyzes the attachment of isoleucine to tRNA(Ile). As IleRS can inadvertently accommodate and process structurally similar amino acids such as valine, to avoid such errors it has two additional distinct tRNA(Ile)-dependent editing activities. One activity is designated as 'pretransfer' editing and involves the hydrolysis of activated Val-AMP. The other activity is designated 'posttransfer' editing and involves deacylation of mischarged Val-tRNA(Ile). This chain is Isoleucine--tRNA ligase, found in Wolbachia sp. subsp. Brugia malayi (strain TRS).